A 180-amino-acid polypeptide reads, in one-letter code: Diphosphoinositol polyphosphate phosphohydrolase 2 (180 aa).

Met-1 carries the post-translational modification N-acetylmethionine. Residues Arg-10, 18-20 (KKR), and 39-41 (SSR) each bind substrate. Residues 18 to 144 (KKRAACLCFR…VHAEYLEKLK (127 aa)) form the Nudix hydrolase domain. Gly-50 and Glu-66 together coordinate Mg(2+). The Nudix box motif lies at 51-72 (GGMEPEEEPGGAAVREVYEEAG). Catalysis depends on Glu-69, which acts as the Proton acceptor. Residue Glu-70 coordinates Mg(2+). Substrate is bound by residues 89–91 (RKH), Arg-115, and Lys-133.

The protein belongs to the Nudix hydrolase family. DIPP subfamily. Requires Mg(2+) as cofactor. The cofactor is Mn(2+). In terms of tissue distribution, expressed in heart and, at lower level in skeletal muscle, pancreas and kidney.

Its subcellular location is the cytoplasm. It catalyses the reaction diphospho-myo-inositol polyphosphate + H2O = myo-inositol polyphosphate + phosphate.. The catalysed reaction is 5-diphospho-1D-myo-inositol 1,2,3,4,6-pentakisphosphate + H2O = 1D-myo-inositol hexakisphosphate + phosphate + H(+). It carries out the reaction 3,5-bis(diphospho)-1D-myo-inositol 1,2,4,6-tetrakisphosphate + H2O = 3-diphospho-1D-myo-inositol 1,2,4,5,6-pentakisphosphate + phosphate + 2 H(+). The enzyme catalyses 5-diphospho-1D-myo-inositol 1,3,4,6-tetrakisphosphate + H2O = 1D-myo-inositol 1,3,4,5,6-pentakisphosphate + phosphate + H(+). It catalyses the reaction P(1),P(6)-bis(5'-adenosyl) hexaphosphate + H2O = 2 ATP + 2 H(+). The catalysed reaction is P(1),P(5)-bis(5'-adenosyl) pentaphosphate + H2O = ADP + ATP + 2 H(+). It carries out the reaction 5-phospho-alpha-D-ribose 1-diphosphate + H2O = alpha-D-ribose 1,5-bisphosphate + phosphate + H(+). Its function is as follows. Cleaves the beta-phosphate from diphosphoinositol polyphosphates such as PP-InsP5 (diphosphoinositol pentakisphosphate), PP-InsP4 (diphosphoinositol tetrakisphosphate) and [PP]2-InsP4 (bisdiphosphoinositol tetrakisphosphate), suggesting that it may play a role in signal transduction. Diadenosine polyphosphates, particularly Ap6A (P(1),P(6)-bis(5a-adenosyl) hexaphosphate) and Ap5A (P(1),P(5)-bis(5'-adenosyl) pentaphosphate) are downstream effectors of a signaling cascade that regulates cardiac KATP channels, can also be substrates, although with lower preference than the diphosphoinositol polyphosphates. Can also catalyze the hydrolysis of 5-phosphoribose 1-diphosphate, generating the glycolytic activator ribose 1,5-bisphosphate. Does not play a role in U8 snoRNA decapping activity. Binds U8 snoRNA. In Homo sapiens (Human), this protein is Diphosphoinositol polyphosphate phosphohydrolase 2.